We begin with the raw amino-acid sequence, 1497 residues long: Collagen alpha-1(XVII) chain (1497 aa).

2 disordered regions span residues 1 to 154 (MDVT…PSTR) and 167 to 186 (GSRS…LPIP). Topologically, residues 1–467 (MDVTKKNKRD…CGSCCSWWKW (467 aa)) are cytoplasmic. A nonhelical region (NC16) region spans residues 1–566 (MDVTKKNKRD…MMEQENGNLR (566 aa)). The span at 9–19 (RDGTEVTERIV) shows a compositional bias: basic and acidic residues. Polar residues-rich tracts occupy residues 57–96 (LTHG…SPGS) and 169–183 (RSAS…SNTL). The tract at residues 145–230 (RLQSASPSTR…WSSTLPAGSS (86 aa)) is necessary for interaction with DST and for the recruitment of DST to hemidesmosome. Residues 468-488 (LLGLLLTWLLLLGLLFGLIAL) traverse the membrane as a helical; Signal-anchor for type II membrane protein segment. Over 489-1497 (AEEVRKLKAR…RRRRSIAVKP (1009 aa)) the chain is Extracellular. The residue at position 544 (S544) is a Phosphoserine; by CK2. 3 disordered regions span residues 562-1011 (NGNL…SSSG), 1209-1234 (GLSF…VSGA), and 1261-1316 (SFIV…TGGG). Residues 567–1482 (GSPGPKGDMG…KGEKGDKGDQ (916 aa)) are triple-helical region. The segment covering 590–602 (PGIPGPLGHPGPQ) has biased composition (pro residues). Low complexity-rich tracts occupy residues 604–635 (PKGQ…RGEA), 661–673 (PGSV…SGSP), 735–748 (EPGA…AGPD), and 774–796 (DPGK…PGRP). Pro residues-rich tracts occupy residues 820–841 (PGPP…PGPA), 858–881 (PPGP…PRGP), and 907–916 (PPGPPGPPGP). Composition is skewed to low complexity over residues 936-946 (GFSTSGSSSFG) and 968-987 (PGVP…GSSS). Composition is skewed to pro residues over residues 994 to 1004 (PPGPPGPPGPP), 1214 to 1228 (PGPP…PRGP), and 1266 to 1275 (PPGPPGPQGP). Low complexity predominate over residues 1289 to 1312 (SRGSSSSSHSSSVRRGSSYSSSMS). Residue N1421 is glycosylated (N-linked (GlcNAc...) asparagine). Residues 1434–1497 (GAIQGPPGQK…RRRRSIAVKP (64 aa)) are disordered. The span at 1458 to 1469 (AGPPGHPGPPGP) shows a compositional bias: pro residues. The segment covering 1472–1481 (HKGEKGDKGD) has biased composition (basic and acidic residues). A nonhelical region (NC1) region spans residues 1483 to 1497 (VYAGRRRRRSIAVKP). Residues 1486-1497 (GRRRRRSIAVKP) show a composition bias toward basic residues.

As to quaternary structure, homotrimers of alpha 1(XVII)chains. Interacts (via cytoplasmic region) with ITGB4 (via cytoplasmic region). Interacts (via cytoplasmic region) with DST isoform 3 (via N-terminus). Interacts (via N-terminus) with PLEC. Interacts (via cytoplasmic region) with DSP. In terms of processing, the intracellular/endo domain is disulfide-linked. Post-translationally, prolines at the third position of the tripeptide repeating unit (G-X-Y) are hydroxylated in some or all of the chains. The ectodomain is shedded from the surface of keratinocytes resulting in a 120-kDa soluble form, also named as 120 kDa linear IgA disease antigen. The shedding is mediated by membrane-bound metalloproteases. This cleavage is inhibited by phosphorylation at Ser-544. As to expression, detected in skin. In the cornea, it is detected in the epithelial basement membrane, the epithelial cells, and at a lower level in stromal cells (at protein level). Stratified squamous epithelia. Found in hemidesmosomes. Expressed in cornea, oral mucosa, esophagus, intestine, kidney collecting ducts, ureter, bladder, urethra and thymus but is absent in lung, blood vessels, skeletal muscle and nerves.

The protein localises to the cell junction. It is found in the hemidesmosome. Its subcellular location is the membrane. The protein resides in the secreted. It localises to the extracellular space. The protein localises to the extracellular matrix. It is found in the basement membrane. May play a role in the integrity of hemidesmosome and the attachment of basal keratinocytes to the underlying basement membrane. Its function is as follows. The 120 kDa linear IgA disease antigen is an anchoring filament component involved in dermal-epidermal cohesion. Is the target of linear IgA bullous dermatosis autoantibodies. This chain is Collagen alpha-1(XVII) chain (COL17A1), found in Homo sapiens (Human).